Here is a 308-residue protein sequence, read N- to C-terminus: MWAWGWAAAALLWLQTAGAGARQELKKSRQLFARVDSPNITTSNREGFPGSVKPPEASGPELSDAHMTWLNFVRRPDDGSSRKRCRGRDKKSRGLSGLPGPPGPPGPPGPPGSPGVGVTPEALLQEFQEILKEATELRFSGLPDTLLPQEPSQRLVVEAFYCRLKGPVLVDKKTLVELQGFQAPTTQGAFLRGSGLSLSLGRFTAPVSAIFQFSASLHVDHSELQGRGRLRTRDMVRVLICIESLCHRHTSLEAVSGLESNSRVFTVQVQGLLHLQSGQYVSVFVDNSSGAVLTIQNTSSFSGMLLGT.

An N-terminal signal peptide occupies residues 1-21 (MWAWGWAAAALLWLQTAGAGA). The segment at 36-119 (DSPNITTSNR…PPGSPGVGVT (84 aa)) is disordered. Asn-39 carries N-linked (GlcNAc...) asparagine glycosylation. Basic residues predominate over residues 82–93 (RKRCRGRDKKSR). A compositionally biased stretch (pro residues) spans 99–113 (PGPPGPPGPPGPPGS). The C1q domain occupies 153 to 308 (QRLVVEAFYC…SSFSGMLLGT (156 aa)).

The protein belongs to the adipolin/erythroferrone family. Homomultimer; disulfide-linked. Adipolin fC1QTNF12: homotrimer; disulfide-linked. Adipolin gC1QTNF12: homodimer; disulfide-linked. May interact with ERFE. Post-translationally, processed into Adipolin fC1QTNF12 and Adipolin gC1QTNF12 by FURIN. Insulin enhances endogenous C1QTNF12 cleavage. In terms of tissue distribution, widely expressed, with high expression in subcutaneous and epididymal white adipose tissues and brown adipose tissue. Expressed in adipocytes (at protein level).

It is found in the secreted. Functionally, insulin-sensitizing adipocyte-secreted protein (adipokine) that regulates glucose metabolism in liver and adipose tissue. Promotes glucose uptake in adipocytes and suppresses de novo glucose production in hepatocytes via the PI3K-Akt signaling pathway. Administration lead to reduction of blood glucose. Able to attenuate inflammation in fat tissue. Acts by activating the Akt signaling in hepatocytes and adipocytes. Not able to increase insulin-stimulated glucose uptake in adipocytes. In terms of biological role, acts by activating the MAP kinase. Increases insulin-stimulated glucose uptake in adipocytes. This chain is Adipolin (C1qtnf12), found in Mus musculus (Mouse).